We begin with the raw amino-acid sequence, 344 residues long: Methionine import ATP-binding protein MetN 1 (344 aa).

In terms of domain architecture, ABC transporter spans 2-241 (IELRNLSQRF…PHHEVTRALI (240 aa)). Position 38–45 (38–45 (GRSGAGKS)) interacts with ATP.

This sequence belongs to the ABC transporter superfamily. Methionine importer (TC 3.A.1.24) family. In terms of assembly, the complex is composed of two ATP-binding proteins (MetN), two transmembrane proteins (MetI) and a solute-binding protein (MetQ).

Its subcellular location is the cell inner membrane. The catalysed reaction is L-methionine(out) + ATP + H2O = L-methionine(in) + ADP + phosphate + H(+). It catalyses the reaction D-methionine(out) + ATP + H2O = D-methionine(in) + ADP + phosphate + H(+). In terms of biological role, part of the ABC transporter complex MetNIQ involved in methionine import. Responsible for energy coupling to the transport system. This chain is Methionine import ATP-binding protein MetN 1, found in Burkholderia orbicola (strain AU 1054).